A 632-amino-acid polypeptide reads, in one-letter code: Chaperone protein HtpG (632 aa).

The segment at 1–339 (MAHETMSFQA…SADLPLNVSR (339 aa)) is a; substrate-binding. Positions 340–559 (EILQESRDVK…DNDMSGYLQR (220 aa)) are b. The c stretch occupies residues 560–632 (MLKAAGQNAP…TNALLLSRAA (73 aa)).

This sequence belongs to the heat shock protein 90 family. As to quaternary structure, homodimer.

Its subcellular location is the cytoplasm. In terms of biological role, molecular chaperone. Has ATPase activity. This chain is Chaperone protein HtpG, found in Burkholderia cenocepacia (strain HI2424).